A 964-amino-acid chain; its full sequence is MRVKILPLVFMTLLLIVPSQMLLPSGQANASTPGFIERVYTDKARYEPGELVTVTAQINNSGGTNWSGDVTMTIFHLENAVYSSVQHASIASGQTTDVTFSWTSDTTDFKGYFVSVDAGSLGQGYSSIDVSSDFAKYPRYGYISEFSSNETAAESAAKVNELAQDYKINAWQFYDWMWRHETMIKRTGGTIDPTWIDLFNRQISWPTINNQIAAIHNQNGAAMAYAMIYAARENYSGFGVNPEWGMYMDPAHTKQLDVDFGNNSTYMYLFDPANAGWQQFIHEQYLDAIQTANFDGIHIDQMGQRNNIYDYSGNSIDLATRFTPFIKAAKTKLTAANSNQDFMTFNIVDGTVNGWAANDVSKNANVDFLYSEIWHLSNSYMQLKDYIDSLRANSGNKAVVLAAYMNYGENIGDRYEAEDAALQHTAVNTDHAGYTGSGFVDQFADVNDSVTFTITAPEEGYYSLVFRFANHSGYTATRNLYVDSNFEIELPFQNQPNWDTWSHETWHQVYLTPGTHTIKLSYDSSNTGAINLDSLTLGTFDEHSIRLADAMMAASGATHIELGEDSQMLAHEYYPNRSKSMRSTLKSAMKDHYNFITAYENLLFDADVIDNDAGKQFINIAGVNTSPDGAANTVWHMSKRTPEYNILHLINLVNNDQNWRNSGNQPTAQTNLATKVYIGAEETITGVYAASPDHNQGATQSLPFTTGTDSSGSYISFTVPSLEYWSMIYMKRSTAAPVDNMYEAETAIKSNVSVNTNHAGYTGSGFVDQFATVNDGVSFIVHASSKDDYVLRFRYSNGGSDANRDVFLNGKYAGTVQLKHTGGWNQWAYGELTVPLAQGSHSVVLWYNSSNSGAVNLDHLKLDKTYIWQFDRQIASVPAGYRITFKAGLPGWVHFGTDNWKNVMDIPLASNGSSDSSLNYEASIGPFPSATTVDVTFLWDDNNNGILEDMIDRWEGTDFQIAIP.

The first 30 residues, 1 to 30 (MRVKILPLVFMTLLLIVPSQMLLPSGQANA), serve as a signal peptide directing secretion. 2 CBM6 domains span residues 413 to 538 (DRYE…LTLG) and 740 to 863 (NMYE…LKLD).

The protein belongs to the glycosyl hydrolase 66 family.

The enzyme catalyses cyclizes part of a (1-&gt;6)-alpha-D-glucan chain by formation of a (1-&gt;6)-alpha-D-glucosidic bond.. Its function is as follows. Produces cycloisomaltooligosaccharide from dextran. This chain is Cycloisomaltooligosaccharide glucanotransferase (cit), found in Niallia circulans (Bacillus circulans).